The primary structure comprises 378 residues: Prolargin (378 aa).

A signal peptide spans 1-21 (MRASFFWLLPLLLILASVAQG). Positions 22–62 (QPTRPKPGIRRKPKPRPTPRFPQAPEPAEPTDLPPPLPPGP) are disordered. Residues 28–38 (PGIRRKPKPRP) are compositionally biased toward basic residues. Positions 39 to 62 (TPRFPQAPEPAEPTDLPPPLPPGP) are enriched in pro residues. LRR repeat units follow at residues 91–110 (RRVP…NNFI), 111–134 (TELP…NNRI), 135–158 (RKVD…KNQL), 159–179 (EEVP…QNLI), 180–203 (SRIP…HNRL), 204–229 (SDGV…HNIL), 230–250 (RKMP…SNKI), 251–274 (ETIP…YNKL), 275–299 (SDRG…HNKI), 300–319 (SNVP…NNSI), 320–358 (EKIN…GNFL), and 359–378 (KPPI…SVVI). The N-linked (GlcNAc...) asparagine glycan is linked to N120. N-linked (GlcNAc...) asparagine glycans are attached at residues N285, N316, and N323. C328 and C369 are disulfide-bonded.

The protein belongs to the small leucine-rich proteoglycan (SLRP) family. SLRP class II subfamily. As to quaternary structure, binds the basement membrane heparan sulfate proteoglycan perlecan and triple helical collagens type I and type II. Glycosylated; contains heparan sulfate. In terms of tissue distribution, expressed in cartilage throughout both fetal development and postnatal life. It is also expressed in the developing embryo prior to skeletogenesis. In adult, highest expression in lung, lower levels in cardiac and skeletal muscle.

It is found in the secreted. The protein resides in the extracellular space. It localises to the extracellular matrix. In terms of biological role, may anchor basement membranes to the underlying connective tissue. The chain is Prolargin (Prelp) from Mus musculus (Mouse).